Here is a 423-residue protein sequence, read N- to C-terminus: Putative galacturan 1,4-alpha-galacturonidase C (423 aa).

A signal peptide spans 1-20 (MQLRASVLLSFLGLASVGHA). 6 N-linked (GlcNAc...) asparagine glycosylation sites follow: N92, N98, N118, N156, N179, and N191. 2 PbH1 repeats span residues 215–236 (ATNI…AIKP) and 238–258 (SYNI…AIGS). The active-site Proton donor is the D229. Cysteines 231 and 248 form a disulfide. N-linked (GlcNAc...) asparagine glycans are attached at residues N245, N344, and N362. Residues C379 and C385 are joined by a disulfide bond. N-linked (GlcNAc...) asparagine glycosylation occurs at N400.

This sequence belongs to the glycosyl hydrolase 28 family.

The protein localises to the secreted. It carries out the reaction [(1-&gt;4)-alpha-D-galacturonosyl](n) + H2O = alpha-D-galacturonate + [(1-&gt;4)-alpha-D-galacturonosyl](n-1). Its function is as follows. Specific in hydrolyzing the terminal glycosidic bond of polygalacturonic acid and oligogalacturonates. This is Putative galacturan 1,4-alpha-galacturonidase C (rgxC) from Aspergillus niger (strain ATCC MYA-4892 / CBS 513.88 / FGSC A1513).